Reading from the N-terminus, the 278-residue chain is Orotidine 5'-phosphate decarboxylase (278 aa).

Residues Asp-40, 62–64 (KTH), 93–102 (DRKFIDIGNT), Tyr-228, and Arg-246 each bind substrate. The active-site Proton donor is the Lys-95.

The protein belongs to the OMP decarboxylase family.

It catalyses the reaction orotidine 5'-phosphate + H(+) = UMP + CO2. It participates in pyrimidine metabolism; UMP biosynthesis via de novo pathway; UMP from orotate: step 2/2. The polypeptide is Orotidine 5'-phosphate decarboxylase (PYR1) (Passalora fulva (Tomato leaf mold)).